We begin with the raw amino-acid sequence, 441 residues long: Glutamyl-tRNA reductase (441 aa).

Substrate contacts are provided by residues 49–52 (TCNR), S110, 115–117 (EPQ), and Q121. C50 (nucleophile) is an active-site residue. 190–195 (GAGEMA) is an NADP(+) binding site.

Belongs to the glutamyl-tRNA reductase family. In terms of assembly, homodimer.

The catalysed reaction is (S)-4-amino-5-oxopentanoate + tRNA(Glu) + NADP(+) = L-glutamyl-tRNA(Glu) + NADPH + H(+). The protein operates within porphyrin-containing compound metabolism; protoporphyrin-IX biosynthesis; 5-aminolevulinate from L-glutamyl-tRNA(Glu): step 1/2. Catalyzes the NADPH-dependent reduction of glutamyl-tRNA(Glu) to glutamate 1-semialdehyde (GSA). The sequence is that of Glutamyl-tRNA reductase from Sulfurihydrogenibium sp. (strain YO3AOP1).